The following is a 402-amino-acid chain: Argininosuccinate synthase (402 aa).

ATP is bound by residues 10 to 18 (AYSGGLDTS) and A38. Residue Y90 participates in L-citrulline binding. G120 provides a ligand contact to ATP. L-aspartate is bound by residues T122, N126, and D127. N126 contributes to the L-citrulline binding site. 5 residues coordinate L-citrulline: R130, S179, S188, E264, and Y276.

The protein belongs to the argininosuccinate synthase family. Type 1 subfamily. As to quaternary structure, homotetramer.

It localises to the cytoplasm. The enzyme catalyses L-citrulline + L-aspartate + ATP = 2-(N(omega)-L-arginino)succinate + AMP + diphosphate + H(+). The protein operates within amino-acid biosynthesis; L-arginine biosynthesis; L-arginine from L-ornithine and carbamoyl phosphate: step 2/3. The polypeptide is Argininosuccinate synthase (Psychromonas ingrahamii (strain DSM 17664 / CCUG 51855 / 37)).